Reading from the N-terminus, the 154-residue chain is Small ribosomal subunit protein eS10 (154 aa).

A disordered region spans residues 91–154; it reads ATMKKQASRP…ERSAPAPQQN (64 aa). The span at 124–135 shows a compositional bias: basic and acidic residues; that stretch reads RGDRRQGGDRRG.

This sequence belongs to the eukaryotic ribosomal protein eS10 family.

The protein resides in the cytoplasm. The polypeptide is Small ribosomal subunit protein eS10 (rps10) (Dictyostelium discoideum (Social amoeba)).